A 139-amino-acid polypeptide reads, in one-letter code: ATP synthase epsilon chain (139 aa).

This sequence belongs to the ATPase epsilon chain family. F-type ATPases have 2 components, CF(1) - the catalytic core - and CF(0) - the membrane proton channel. CF(1) has five subunits: alpha(3), beta(3), gamma(1), delta(1), epsilon(1). CF(0) has three main subunits: a, b and c.

It localises to the cell membrane. Its function is as follows. Produces ATP from ADP in the presence of a proton gradient across the membrane. This is ATP synthase epsilon chain from Enterococcus faecalis (strain ATCC 700802 / V583).